We begin with the raw amino-acid sequence, 428 residues long: Histidine--tRNA ligase (428 aa).

This sequence belongs to the class-II aminoacyl-tRNA synthetase family. In terms of assembly, homodimer.

Its subcellular location is the cytoplasm. It carries out the reaction tRNA(His) + L-histidine + ATP = L-histidyl-tRNA(His) + AMP + diphosphate + H(+). The polypeptide is Histidine--tRNA ligase (Lactobacillus johnsonii (strain CNCM I-12250 / La1 / NCC 533)).